Consider the following 230-residue polypeptide: Flagellar L-ring protein (230 aa).

Positions 1–18 are cleaved as a signal peptide; sequence MNRLNIAVSCLATALLFG. A lipid anchor (N-palmitoyl cysteine) is attached at cysteine 19. A lipid anchor (S-diacylglycerol cysteine) is attached at cysteine 19.

Belongs to the FlgH family. In terms of assembly, the basal body constitutes a major portion of the flagellar organelle and consists of four rings (L,P,S, and M) mounted on a central rod.

The protein localises to the cell outer membrane. It localises to the bacterial flagellum basal body. Assembles around the rod to form the L-ring and probably protects the motor/basal body from shearing forces during rotation. The polypeptide is Flagellar L-ring protein (Legionella pneumophila (strain Corby)).